We begin with the raw amino-acid sequence, 474 residues long: uncharacterized protein (474 aa).

This is an uncharacterized protein from Magallana gigas (Pacific oyster).